The primary structure comprises 141 residues: VLSPADKTNVKTTWDKLGGHAGEYGGEALERTFMSFPTTKTYFPHFDLSPGSAQVKAHGKKVADALTTAVAHIDDLPGALSALSDLHAYKLRVDPVNFKLLSHCLLVTLACHHPAEFTPAVHASLDKFFSTVSTVLTSKYR.

The Globin domain occupies 1 to 141 (VLSPADKTNV…VSTVLTSKYR (141 aa)). S3 bears the Phosphoserine mark. N6-succinyllysine is present on K7. T8 is subject to Phosphothreonine. Residue K11 is modified to N6-succinyllysine. Residue K16 is modified to N6-acetyllysine; alternate. N6-succinyllysine; alternate is present on K16. Y24 is subject to Phosphotyrosine. Position 35 is a phosphoserine (S35). K40 is modified (N6-succinyllysine). The residue at position 49 (S49) is a Phosphoserine. O2 is bound at residue H58. H87 serves as a coordination point for heme b. A Phosphoserine modification is found at S102. T108 carries the phosphothreonine modification. S124 carries the post-translational modification Phosphoserine. Residues T134 and T137 each carry the phosphothreonine modification. S138 bears the Phosphoserine mark.

The protein belongs to the globin family. As to quaternary structure, heterotetramer of two alpha chains and two beta chains. As to expression, red blood cells.

In terms of biological role, involved in oxygen transport from the lung to the various peripheral tissues. Its function is as follows. Hemopressin acts as an antagonist peptide of the cannabinoid receptor CNR1. Hemopressin-binding efficiently blocks cannabinoid receptor CNR1 and subsequent signaling. This is Hemoglobin subunit alpha (HBA) from Odobenus rosmarus divergens (Pacific walrus).